The primary structure comprises 388 residues: Flap endonuclease 1 (388 aa).

Residues 1-104 (MGILGLSKLI…GELAKRAERR (104 aa)) form an N-domain region. Aspartate 34 serves as a coordination point for Mg(2+). DNA contacts are provided by arginine 47 and arginine 70. Mg(2+) contacts are provided by aspartate 86, glutamate 158, glutamate 160, aspartate 179, and aspartate 181. Positions 122–253 (EIEKFNRRLV…KRAIELIKTY (132 aa)) are I-domain. Glutamate 158 provides a ligand contact to DNA. Residues glycine 231 and aspartate 233 each coordinate DNA. Aspartate 233 contacts Mg(2+). Positions 336-344 (TQVRLDSFF) are interaction with PCNA. The segment at 351–388 (PNATAAAKRKAEEIKKSANNKKAKTSGGSGAARGRRPK) is disordered.

It belongs to the XPG/RAD2 endonuclease family. FEN1 subfamily. In terms of assembly, interacts with PCNA. Three molecules of FEN1 bind to one PCNA trimer with each molecule binding to one PCNA monomer. PCNA stimulates the nuclease activity without altering cleavage specificity. The cofactor is Mg(2+). Post-translationally, phosphorylated. Phosphorylation upon DNA damage induces relocalization to the nuclear plasma.

It localises to the nucleus. It is found in the nucleolus. Its subcellular location is the nucleoplasm. The protein resides in the mitochondrion. In terms of biological role, structure-specific nuclease with 5'-flap endonuclease and 5'-3' exonuclease activities involved in DNA replication and repair. During DNA replication, cleaves the 5'-overhanging flap structure that is generated by displacement synthesis when DNA polymerase encounters the 5'-end of a downstream Okazaki fragment. It enters the flap from the 5'-end and then tracks to cleave the flap base, leaving a nick for ligation. Also involved in the long patch base excision repair (LP-BER) pathway, by cleaving within the apurinic/apyrimidinic (AP) site-terminated flap. Acts as a genome stabilization factor that prevents flaps from equilibrating into structures that lead to duplications and deletions. Also possesses 5'-3' exonuclease activity on nicked or gapped double-stranded DNA, and exhibits RNase H activity. Also involved in replication and repair of rDNA and in repairing mitochondrial DNA. The chain is Flap endonuclease 1 from Drosophila mojavensis (Fruit fly).